We begin with the raw amino-acid sequence, 210 residues long: MADFLARDYRSQGEAAHEMLPTFLIGKILRERIVDSIYWKEQCFGLNACSLVDRAVRLEYIGGQYGNQRPTEFICLLYKLLQIAPEKEIIQQYLSIPEFKYLRALAAFYVRLTWDDVEVHQTLEPLLRDYRKLRIRTNSEIRLTYLDEVVDDLLNAEVVCDISLPPLRSRLQLEDLDLLEPLSSSSDEEDDDEEQISKLESNEGAVDRNI.

The interval 181-210 is disordered; the sequence is PLSSSSDEEDDDEEQISKLESNEGAVDRNI. The segment covering 195–210 has biased composition (basic and acidic residues); it reads QISKLESNEGAVDRNI.

The protein belongs to the PRP38 family. As to quaternary structure, component of the 25S U4/U6.U5 tri-snRNP particle, a subcomplex of the spliceosome.

It localises to the nucleus. In terms of biological role, required for pre-mRNA splicing and maintenance of stable U6 small nuclear RNA levels. Implicated in the formation of stable and biologically active snRNP structures. As part of the U4/U6.U5 tri-snRNP particle, dispensible for spliceosome assembly, but required for conformational changes, which result in U4 snRNA release and the subsequent catalytic activation of the spliceosome. In Schizosaccharomyces pombe (strain 972 / ATCC 24843) (Fission yeast), this protein is Pre-mRNA-splicing factor 38.